The sequence spans 954 residues: Translation initiation factor IF-2 (954 aa).

The segment covering 56 to 75 (KAAAPAAPKAPAPAAESRPA) has biased composition (low complexity). The interval 56-355 (KAAAPAAPKA…GVSVPRGDGN (300 aa)) is disordered. The segment covering 76–87 (APAPGPAAPKAP) has biased composition (pro residues). 2 stretches are compositionally biased toward low complexity: residues 88-125 (APKV…KPGA) and 138-151 (PRQG…SAPR). The segment covering 241 to 254 (PGAPRPGGPRPTPG) has biased composition (pro residues). The span at 269-322 (GRPGGGGRGPGRPGAPGTGGPGGGGGAPAGGGFGKGGRGRGGTQGAFGKGGAGR) shows a compositional bias: gly residues. Over residues 323–332 (GKQRKSKRAK) the composition is skewed to basic residues. The region spanning 447 to 618 (PRAPVVTVMG…AVLLTADAAL (172 aa)) is the tr-type G domain. The segment at 456 to 463 (GHVDHGKT) is G1. Residue 456-463 (GHVDHGKT) coordinates GTP. The G2 stretch occupies residues 481 to 485 (GITQH). The interval 506–509 (DTPG) is G3. GTP is bound by residues 506-510 (DTPGH) and 560-563 (NKID). The interval 560-563 (NKID) is G4. Residues 596 to 598 (SAR) form a G5 region.

This sequence belongs to the TRAFAC class translation factor GTPase superfamily. Classic translation factor GTPase family. IF-2 subfamily.

Its subcellular location is the cytoplasm. Its function is as follows. One of the essential components for the initiation of protein synthesis. Protects formylmethionyl-tRNA from spontaneous hydrolysis and promotes its binding to the 30S ribosomal subunits. Also involved in the hydrolysis of GTP during the formation of the 70S ribosomal complex. The chain is Translation initiation factor IF-2 from Pseudarthrobacter chlorophenolicus (strain ATCC 700700 / DSM 12829 / CIP 107037 / JCM 12360 / KCTC 9906 / NCIMB 13794 / A6) (Arthrobacter chlorophenolicus).